The primary structure comprises 147 residues: Small ribosomal subunit protein bS6 (147 aa).

Positions 97–141 are enriched in basic and acidic residues; sequence EEGPSAMMRKADRDRERDDRGGGFRGDREGGFRGDRGPRRPREEA. Residues 97 to 147 are disordered; sequence EEGPSAMMRKADRDRERDDRGGGFRGDREGGFRGDRGPRRPREEAPAVVEE.

The protein belongs to the bacterial ribosomal protein bS6 family.

Binds together with bS18 to 16S ribosomal RNA. This is Small ribosomal subunit protein bS6 from Nitrobacter hamburgensis (strain DSM 10229 / NCIMB 13809 / X14).